The following is a 205-amino-acid chain: UPF0548 protein At2g17695 (205 aa).

Belongs to the UPF0548 family.

The protein is UPF0548 protein At2g17695 of Arabidopsis thaliana (Mouse-ear cress).